The chain runs to 493 residues: Glutamyl-tRNA(Gln) amidotransferase subunit A (493 aa).

Residues Lys-79 and Ser-159 each act as charge relay system in the active site. Ser-183 acts as the Acyl-ester intermediate in catalysis.

This sequence belongs to the amidase family. GatA subfamily. As to quaternary structure, heterotrimer of A, B and C subunits.

The catalysed reaction is L-glutamyl-tRNA(Gln) + L-glutamine + ATP + H2O = L-glutaminyl-tRNA(Gln) + L-glutamate + ADP + phosphate + H(+). In terms of biological role, allows the formation of correctly charged Gln-tRNA(Gln) through the transamidation of misacylated Glu-tRNA(Gln) in organisms which lack glutaminyl-tRNA synthetase. The reaction takes place in the presence of glutamine and ATP through an activated gamma-phospho-Glu-tRNA(Gln). In Sinorhizobium fredii (strain NBRC 101917 / NGR234), this protein is Glutamyl-tRNA(Gln) amidotransferase subunit A.